The sequence spans 590 residues: Arginine--tRNA ligase (590 aa).

The 'HIGH' region signature appears at 132-142 (PNTNKPLHLGH).

It belongs to the class-I aminoacyl-tRNA synthetase family. As to quaternary structure, monomer.

It localises to the cytoplasm. The enzyme catalyses tRNA(Arg) + L-arginine + ATP = L-arginyl-tRNA(Arg) + AMP + diphosphate. In Treponema denticola (strain ATCC 35405 / DSM 14222 / CIP 103919 / JCM 8153 / KCTC 15104), this protein is Arginine--tRNA ligase.